The following is a 70-amino-acid chain: Conotoxin Ep11.12 (70 aa).

The signal sequence occupies residues 1–26; it reads MMFRVTSVGCFLLVILSLNLVVLTNA. Intrachain disulfides connect Cys-27-Cys-41, Cys-34-Cys-46, Cys-40-Cys-50, and Cys-45-Cys-54. Proline amide is present on Pro-57. A propeptide spanning residues 61-70 is cleaved from the precursor; the sequence is AKLREFFRQR.

Belongs to the conotoxin I2 superfamily. In terms of tissue distribution, expressed by the venom duct.

The protein resides in the secreted. The chain is Conotoxin Ep11.12 from Conus episcopatus (Bishop's cone).